A 109-amino-acid chain; its full sequence is Staphostatin B (109 aa).

Residues 97–101 (IGTSR) form a binds to staphopain B region.

Belongs to the protease inhibitor I57 (SspC) family. In terms of assembly, forms a stable non-covalent complex with prematurely activated/folded SspB.

Its subcellular location is the cytoplasm. Functionally, specifically inhibits the cysteine protease staphopain B (SspB) by blocking the active site of the enzyme. Probably required to protect cytoplasmic proteins from being degraded by prematurely activated/folded prostaphopain B. Also involved in growth capacity, viability and bacterial morphology. The polypeptide is Staphostatin B (sspC) (Staphylococcus aureus (strain MRSA252)).